A 192-amino-acid polypeptide reads, in one-letter code: Iron sulfur cluster assembly protein 1, mitochondrial (192 aa).

Residues 1–53 constitute a mitochondrion transit peptide; that stretch reads MSVFRRSVQCVGVLPSILAQRSSLLARPANLQFLKTNSSKFVPQVTANVSRRM.

The protein belongs to the NifU family. As to quaternary structure, homodimer. Component of the core Fe-S cluster (ISC) assembly machinery. [2Fe-2S] cluster is required as a cofactor.

Its subcellular location is the mitochondrion. It localises to the mitochondrion matrix. It functions in the pathway cofactor biosynthesis; iron-sulfur cluster biosynthesis. Its function is as follows. Scaffold protein for the de novo synthesis of iron-sulfur (Fe-S) clusters within mitochondria, which is required for maturation of both mitochondrial and cytoplasmic [2Fe-2S] and [4Fe-4S] proteins. First, a [2Fe-2S] cluster is transiently assembled on the scaffold protein isu1. In a second step, the cluster is released from isu1, transferred to a glutaredoxin, followed by the formation of mitochondrial [2Fe-2S] proteins, the synthesis of [4Fe-4S] clusters and their target-specific insertion into the recipient apoproteins. Cluster assembly on isu1 depends on the function of the cysteine desulfurase complex nfs1-isd11, which serves as the sulfur donor for cluster synthesis, the iron-binding protein frataxin as the putative iron donor, and the electron transfer chain comprised of ferredoxin reductase and ferredoxin, which receive their electrons from NADH. This is Iron sulfur cluster assembly protein 1, mitochondrial (isu1) from Schizosaccharomyces pombe (strain 972 / ATCC 24843) (Fission yeast).